The sequence spans 102 residues: Small ribosomal subunit protein uS10 (102 aa).

Belongs to the universal ribosomal protein uS10 family. Part of the 30S ribosomal subunit.

Involved in the binding of tRNA to the ribosomes. In Mesoplasma florum (strain ATCC 33453 / NBRC 100688 / NCTC 11704 / L1) (Acholeplasma florum), this protein is Small ribosomal subunit protein uS10.